Consider the following 534-residue polypeptide: Calmodulin calcium-dependent NAD kinase (534 aa).

Residues 167–196 form a calmodulin-binding region; the sequence is QKVPKLKDFVMAATRKQRFERVTKDLKVKR. 238–245 lines the ATP pocket; the sequence is GGMGAGKS.

In terms of assembly, interacts with calmodulin (CaM) in a calcium Ca(2+)-dependent manner in vitro. The cofactor is Ca(2+).

The protein resides in the mitochondrion outer membrane. The enzyme catalyses NAD(+) + ATP = ADP + NADP(+) + H(+). Functionally, phosphorylates NAD(+) to produce NADP(+) in a calmodulin calcium-dependent manner. Does not possess activity toward NADH. Has broad specificity for the phosphoryl donor, as ATP, CTP, GTP and UTP can be used interchangeably and produce similar efficiencies. May play a role in producing NADP(H) needed to regulate the elicitor-induced reactive oxygen species (ROS) burst by sustaining the activity of NADPH oxidases. Does not seem to play a role in photosynthesis-driven growth. This chain is Calmodulin calcium-dependent NAD kinase, found in Arabidopsis thaliana (Mouse-ear cress).